The chain runs to 302 residues: Tetrahydromethanopterin S-methyltransferase subunit E (302 aa).

6 helical membrane passes run 3 to 23 (PLIS…AGAS), 86 to 106 (PLFA…TFAV), 132 to 152 (ITPI…VSYL), 155 to 175 (VVLG…ITIG), 233 to 253 (PVTG…TTIF), and 259 to 279 (LGWL…IWNW).

It belongs to the MtrE family. The complex is composed of 8 subunits; MtrA, MtrB, MtrC, MtrD, MtrE, MtrF, MtrG and MtrH.

The protein localises to the cell membrane. It carries out the reaction 5-methyl-5,6,7,8-tetrahydromethanopterin + coenzyme M + 2 Na(+)(in) = 5,6,7,8-tetrahydromethanopterin + methyl-coenzyme M + 2 Na(+)(out). It participates in one-carbon metabolism; methanogenesis from CO(2); methyl-coenzyme M from 5,10-methylene-5,6,7,8-tetrahydromethanopterin: step 2/2. Part of a complex that catalyzes the formation of methyl-coenzyme M and tetrahydromethanopterin from coenzyme M and methyl-tetrahydromethanopterin. This is an energy-conserving, sodium-ion translocating step. This is Tetrahydromethanopterin S-methyltransferase subunit E from Methanosarcina barkeri (strain Fusaro / DSM 804).